The following is a 176-amino-acid chain: Transcriptional repressor NrdR (176 aa).

The segment at 3–34 (CPFCQHTDSRVLESRSAEAGQSVRRRRECLQC) is a zinc-finger region. The region spanning 49-139 (ITVIKRNQDR…VYRQFRGIRD (91 aa)) is the ATP-cone domain. Residues 151–176 (GDGPLPSVLDEPYEDTAQPTIMISPQ) are disordered. Polar residues predominate over residues 167-176 (AQPTIMISPQ).

Belongs to the NrdR family. Zn(2+) serves as cofactor.

In terms of biological role, negatively regulates transcription of bacterial ribonucleotide reductase nrd genes and operons by binding to NrdR-boxes. This Acaryochloris marina (strain MBIC 11017) protein is Transcriptional repressor NrdR.